Here is a 155-residue protein sequence, read N- to C-terminus: Low molecular weight phosphotyrosine protein phosphatase 1 (155 aa).

Cys-9 (nucleophile) is an active-site residue. Arg-15 is an active-site residue. The active-site Proton donor is the Asp-124.

It belongs to the low molecular weight phosphotyrosine protein phosphatase family. In terms of tissue distribution, cone cells and primary pigment cells in developing pupal retina.

It localises to the cytoplasm. The catalysed reaction is O-phospho-L-tyrosyl-[protein] + H2O = L-tyrosyl-[protein] + phosphate. It catalyses the reaction a phosphate monoester + H2O = an alcohol + phosphate. Acts on tyrosine phosphorylated proteins, low-MW aryl phosphates and natural and synthetic acyl phosphates. The polypeptide is Low molecular weight phosphotyrosine protein phosphatase 1 (primo-1) (Drosophila melanogaster (Fruit fly)).